We begin with the raw amino-acid sequence, 255 residues long: MVLIRVIANLLILQVSYAQKSSELVIGGDECDINEHPFLAFMYYSPRYFCGMTLINQEWVLTAAHCNRRFMRIHLGKHAGSVANYDEVVRYPKEKFICPNKKKNVITDKDIMLIRLDRPVKNSEHIAPLSLPSNPPSVGSVCRIMGWGAITTSEDTYPDVPHCANINLFNNTVCREAYNGLPAKTLCAGVLQGGIDTCGGDSGGPLICNGQFQGILSWGSDPCAEPRKPAFYTKVFDYLPWIQSIIAGNKTATCP.

The first 18 residues, 1–18 (MVLIRVIANLLILQVSYA), serve as a signal peptide directing secretion. Positions 19-24 (QKSSEL) are excised as a propeptide. The region spanning 25-247 (VIGGDECDIN…YLPWIQSIIA (223 aa)) is the Peptidase S1 domain. 6 cysteine pairs are disulfide-bonded: C31–C163, C50–C66, C98–C254, C142–C208, C174–C187, and C198–C223. Active-site charge relay system residues include H65 and D110. N170 carries N-linked (GlcNAc...) asparagine glycosylation. The Charge relay system role is filled by S202. N-linked (GlcNAc...) asparagine glycosylation is present at N249.

It belongs to the peptidase S1 family. Snake venom subfamily. Monomer. In terms of tissue distribution, expressed by the venom gland.

It localises to the secreted. The enzyme catalyses Selective cleavage of Arg-|-Xaa bond in fibrinogen, to form fibrin, and release fibrinopeptide A. The specificity of further degradation of fibrinogen varies with species origin of the enzyme.. Functionally, thrombin-like snake venom serine protease. Cleaves Arg-Gly bonds in fibrinogen alpha chains (FGA). The chain is Thrombin-like enzyme batroxobin from Bothrops atrox (Barba amarilla).